Reading from the N-terminus, the 302-residue chain is Glutaminase (302 aa).

7 residues coordinate substrate: S61, N111, E155, N162, Y186, Y238, and V256.

It belongs to the glutaminase family. As to quaternary structure, homotetramer.

The enzyme catalyses L-glutamine + H2O = L-glutamate + NH4(+). The chain is Glutaminase from Pseudomonas savastanoi pv. phaseolicola (strain 1448A / Race 6) (Pseudomonas syringae pv. phaseolicola (strain 1448A / Race 6)).